The following is a 174-amino-acid chain: Adipose-secreted signaling protein (174 aa).

Alanine 2 carries the post-translational modification N-acetylalanine. Residue threonine 147 is modified to Phosphothreonine.

Belongs to the ADISSP family.

It is found in the secreted. In terms of biological role, adipocyte-secreted protein (adipokine) that acts as a key regulator for white adipose tissue (WAT) thermogenesis and glucose homeostasis at least in part through activation of protein kinase A (PKA). The chain is Adipose-secreted signaling protein from Rattus norvegicus (Rat).